We begin with the raw amino-acid sequence, 296 residues long: Adrenocorticotropic hormone receptor (296 aa).

The Extracellular segment spans residues 1–23; sequence MKHIINSYEHTNDTARNNSDCPD. 2 N-linked (GlcNAc...) asparagine glycosylation sites follow: N12 and N17. Disulfide bonds link C21-C253 and C245-C251. Residues 24–49 form a helical membrane-spanning segment; the sequence is VVLPEEIFFTISVIGILENLIVLLAV. Residues 50–58 lie on the Cytoplasmic side of the membrane; it reads IKNKNLQSP. Residues 59–79 form a helical membrane-spanning segment; that stretch reads MYFFICSLAISDMLGSLYKIL. The Extracellular portion of the chain corresponds to 80 to 104; sequence ENILIMFRNMGYLKPRGSFESTADD. A helical transmembrane segment spans residues 105–126; it reads IIDCMFILSLLGSIFSLSVIAA. The Cytoplasmic segment spans residues 127–147; sequence DRYITIFHALQYHSIVTMRRT. A helical membrane pass occupies residues 148–168; that stretch reads IITLTIIWMFCTGSGITMVIF. The Extracellular portion of the chain corresponds to 169-180; that stretch reads SHHIPTVLTFTS. A helical membrane pass occupies residues 181–199; that stretch reads LFPLMLVFILCLYIHMFLL. Residues 200-217 lie on the Cytoplasmic side of the membrane; the sequence is ARSHARKISTLPRTNMKG. The helical transmembrane segment at 218 to 244 threads the bilayer; that stretch reads AMTLTILLGVFIFCWAPFVLHVLLMTF. Residues 245–256 lie on the Extracellular side of the membrane; the sequence is CPNNPYCVCYMS. The helical transmembrane segment at 257–278 threads the bilayer; sequence LFQVNGMLIMCNAVIDPFIYAF. At 279 to 296 the chain is on the cytoplasmic side; it reads RSPELRDAFKRMLFCNRY. C293 carries the S-palmitoyl cysteine lipid modification.

This sequence belongs to the G-protein coupled receptor 1 family. In terms of assembly, homodimer. Interacts with corticotropin (ACTH). Interacts with MRAP; this interaction targets MC2R to the plasma membrane. Interacts with MRAP2; competing with MRAP for binding to MC2R and impairing the binding of corticotropin (ACTH). Ubiquitinated by MGRN1 that may be involved in post-endocytic trafficking and/or degradation of internalized receptor.

The protein localises to the cell membrane. In terms of biological role, hormone receptor primarily expressed in adrenal cortex that plays a key role in regulating adrenocortical function. Upon corticotropin (ACTH) binding, facilitates the release of adrenal glucocorticoids, including cortisol and corticosterone. In addition, MC2R is required for fetal and neonatal adrenal gland development. Mechanistically, activates adenylate cyclase (cAMP), the MAPK cascade as well as the cAMP-dependent protein kinase A pathway leading to steroidogenic factor 1/NR5A1-mediated transcriptional activation. This Mus musculus (Mouse) protein is Adrenocorticotropic hormone receptor (Mc2r).